Consider the following 402-residue polypeptide: Calcium-responsive transactivator (402 aa).

The N-terminal auto-inhibitory domain; necessary for interaction with SMARCA4/BRG1 stretch occupies residues 1 to 148; sequence MSVAFASARP…TLPTTSMSMS (148 aa). The SH2-binding signature appears at 50 to 53; the sequence is YQQI. 5 disordered regions span residues 72–129, 141–170, 195–250, 262–290, and 305–402; these read QSLL…GPNH, PTTS…SVPL, MHQQ…SSQQ, QYGH…YQPA, and TQHY…NYQQ. Over residues 92-106 the composition is skewed to low complexity; it reads QSGSAQGLHSQGSLS. Residues 117–129 are compositionally biased toward polar residues; the sequence is SLMQAQIGNGPNH. Residues 149 to 237 are methionine-rich intra-molecular domain; that stretch reads GSGHGSGPGY…GGGVMGQRPM (89 aa). Residues 196 to 224 are compositionally biased toward low complexity; sequence HQQAASSHYSAAQGGSQHYQGQSMAMMGQ. Positions 251-323 are MFD domain; that stretch reads YLGQEEYYGG…SQYSQQQTGY (73 aa). 2 stretches are compositionally biased toward low complexity: residues 311–379 and 390–402; these read GGNS…RASQ and YGYE…NYQQ. The tract at residues 340-402 is necessary for nuclear localization; sequence NQQSYPGQQQ…EQGQYGNYQQ (63 aa). The SH2-binding signature appears at 359–362; sequence SQYS. An SH3-binding motif is present at residues 377–385; that stretch reads ASQTGPSTQ. Positions 393–402 are necessary for interaction with CREBBP and for the recruitment of CREBBP to the nuclear bodies; sequence EQGQYGNYQQ. The SH2-binding motif lies at 397-400; sequence YGNY.

This sequence belongs to the SS18 family. As to quaternary structure, homodimer. Dimerization may be necessary for its function in neuronal dendritic development. Interacts (via C-terminus) with CREBBP (via N-terminus), EP300 and SMARCA4/BRG1. Interacts with the nBAF complex. Association with CREBBP facilitates transcription while the association with SMARCA4/BRG1 suppresses CREST-mediated transcription in resting neurons.

Its subcellular location is the nucleus. The protein localises to the chromosome. The protein resides in the centromere. It is found in the kinetochore. In terms of biological role, transcriptional activator which is required for calcium-dependent dendritic growth and branching in cortical neurons. Recruits CREB-binding protein (CREBBP) to nuclear bodies. Component of the CREST-BRG1 complex, a multiprotein complex that regulates promoter activation by orchestrating a calcium-dependent release of a repressor complex and a recruitment of an activator complex. In resting neurons, transcription of the c-FOS promoter is inhibited by BRG1-dependent recruitment of a phospho-RB1-HDAC1 repressor complex. Upon calcium influx, RB1 is dephosphorylated by calcineurin, which leads to release of the repressor complex. At the same time, there is increased recruitment of CREBBP to the promoter by a CREST-dependent mechanism, which leads to transcriptional activation. The CREST-BRG1 complex also binds to the NR2B promoter, and activity-dependent induction of NR2B expression involves a release of HDAC1 and recruitment of CREBBP. This Bos taurus (Bovine) protein is Calcium-responsive transactivator (SS18L1).